We begin with the raw amino-acid sequence, 2273 residues long: Linear gramicidin synthase subunit A (2273 aa).

Residues 1-144 (MRILFLTTFM…AIEELFIREW (144 aa)) form a GART region. 2 consecutive Carrier domains span residues 693–767 (APTD…TEQK) and 1724–1798 (APRT…TSEQ). O-(pantetheine 4'-phosphoryl)serine is present on residues serine 728 and serine 1759.

This sequence belongs to the ATP-dependent AMP-binding enzyme family. Large multienzyme complex composed of 4 subunits; LgrA, LgrB, LgrC and LgrD. It depends on pantetheine 4'-phosphate as a cofactor.

Its function is as follows. Activates valine (or leucine, but much less frequently), and then glycine and catalyzes the formation of the peptide bond in the first step of peptide synthesis. This enzyme may also play a role in N-formylation of the first amino acid residue in the synthesized dipeptide. The polypeptide is Linear gramicidin synthase subunit A (lgrA) (Brevibacillus parabrevis).